A 600-amino-acid chain; its full sequence is Glutamine--fructose-6-phosphate aminotransferase [isomerizing] (600 aa).

Cys2 (nucleophile; for GATase activity) is an active-site residue. A Glutamine amidotransferase type-2 domain is found at 2–217; that stretch reads CGIVGYIGQL…DKEMVIVTDD (216 aa). SIS domains lie at 283–422 and 452–590; these read IAAA…KNGI and IARE…VDKP. Lys595 serves as the catalytic For Fru-6P isomerization activity.

As to quaternary structure, homodimer.

Its subcellular location is the cytoplasm. It carries out the reaction D-fructose 6-phosphate + L-glutamine = D-glucosamine 6-phosphate + L-glutamate. Catalyzes the first step in hexosamine metabolism, converting fructose-6P into glucosamine-6P using glutamine as a nitrogen source. This Bacillus subtilis (strain 168) protein is Glutamine--fructose-6-phosphate aminotransferase [isomerizing].